Consider the following 341-residue polypeptide: Biotin synthase (341 aa).

The Radical SAM core domain maps to 53–272 (NHVETASLLS…IAVARIMMPK (220 aa)). Positions 68, 72, and 75 each coordinate [4Fe-4S] cluster. 4 residues coordinate [2Fe-2S] cluster: C112, C143, C203, and R276.

This sequence belongs to the radical SAM superfamily. Biotin synthase family. Homodimer. The cofactor is [4Fe-4S] cluster. [2Fe-2S] cluster serves as cofactor.

It catalyses the reaction (4R,5S)-dethiobiotin + (sulfur carrier)-SH + 2 reduced [2Fe-2S]-[ferredoxin] + 2 S-adenosyl-L-methionine = (sulfur carrier)-H + biotin + 2 5'-deoxyadenosine + 2 L-methionine + 2 oxidized [2Fe-2S]-[ferredoxin]. It participates in cofactor biosynthesis; biotin biosynthesis; biotin from 7,8-diaminononanoate: step 2/2. Catalyzes the conversion of dethiobiotin (DTB) to biotin by the insertion of a sulfur atom into dethiobiotin via a radical-based mechanism. The protein is Biotin synthase of Nitrobacter winogradskyi (strain ATCC 25391 / DSM 10237 / CIP 104748 / NCIMB 11846 / Nb-255).